The sequence spans 61 residues: Sec-independent protein translocase protein TatA (61 aa).

A helical membrane pass occupies residues 1 to 21 (MFGIGMPELIVILVIVLVVFG).

This sequence belongs to the TatA/E family. The Tat system comprises two distinct complexes: a TatABC complex, containing multiple copies of TatA, TatB and TatC subunits, and a separate TatA complex, containing only TatA subunits. Substrates initially bind to the TatABC complex, which probably triggers association of the separate TatA complex to form the active translocon.

It is found in the cell inner membrane. Part of the twin-arginine translocation (Tat) system that transports large folded proteins containing a characteristic twin-arginine motif in their signal peptide across membranes. TatA could form the protein-conducting channel of the Tat system. This is Sec-independent protein translocase protein TatA from Geobacter metallireducens (strain ATCC 53774 / DSM 7210 / GS-15).